A 171-amino-acid chain; its full sequence is uncharacterized protein (171 aa).

It belongs to the mimivirus R24/R907 family.

This is an uncharacterized protein from Acanthamoeba polyphaga (Amoeba).